The following is a 335-amino-acid chain: UDP-N-acetylglucosamine--N-acetylmuramyl-(pentapeptide) pyrophosphoryl-undecaprenol N-acetylglucosamine transferase (335 aa).

UDP-N-acetyl-alpha-D-glucosamine-binding positions include 9 to 11 (TGG), N123, S176, and Q274.

The protein belongs to the glycosyltransferase 28 family. MurG subfamily.

Its subcellular location is the cell inner membrane. It carries out the reaction di-trans,octa-cis-undecaprenyl diphospho-N-acetyl-alpha-D-muramoyl-L-alanyl-D-glutamyl-meso-2,6-diaminopimeloyl-D-alanyl-D-alanine + UDP-N-acetyl-alpha-D-glucosamine = di-trans,octa-cis-undecaprenyl diphospho-[N-acetyl-alpha-D-glucosaminyl-(1-&gt;4)]-N-acetyl-alpha-D-muramoyl-L-alanyl-D-glutamyl-meso-2,6-diaminopimeloyl-D-alanyl-D-alanine + UDP + H(+). It functions in the pathway cell wall biogenesis; peptidoglycan biosynthesis. Its function is as follows. Cell wall formation. Catalyzes the transfer of a GlcNAc subunit on undecaprenyl-pyrophosphoryl-MurNAc-pentapeptide (lipid intermediate I) to form undecaprenyl-pyrophosphoryl-MurNAc-(pentapeptide)GlcNAc (lipid intermediate II). In Campylobacter fetus subsp. fetus (strain 82-40), this protein is UDP-N-acetylglucosamine--N-acetylmuramyl-(pentapeptide) pyrophosphoryl-undecaprenol N-acetylglucosamine transferase.